Here is a 148-residue protein sequence, read N- to C-terminus: uncharacterized protein (148 aa).

Residues 22–40 form a helical membrane-spanning segment; the sequence is YFLSLTVVISIIHLFTTCV. The segment at 43-141 is histidine-rich; the sequence is HNHSTHFPYL…YYPISRHYLH (99 aa).

The protein localises to the host membrane. This is an uncharacterized protein from African swine fever virus (strain Badajoz 1971 Vero-adapted) (Ba71V).